A 629-amino-acid chain; its full sequence is tRNA uridine 5-carboxymethylaminomethyl modification enzyme MnmG (629 aa).

Residues 13-18, Val-125, and Ser-180 contribute to the FAD site; that span reads GGGHAG. 273–287 provides a ligand contact to NAD(+); sequence GPRYCPSIEDKVMRF. Residue Gln-370 coordinates FAD.

The protein belongs to the MnmG family. Homodimer. Heterotetramer of two MnmE and two MnmG subunits. The cofactor is FAD.

The protein localises to the cytoplasm. In terms of biological role, NAD-binding protein involved in the addition of a carboxymethylaminomethyl (cmnm) group at the wobble position (U34) of certain tRNAs, forming tRNA-cmnm(5)s(2)U34. The chain is tRNA uridine 5-carboxymethylaminomethyl modification enzyme MnmG from Citrobacter koseri (strain ATCC BAA-895 / CDC 4225-83 / SGSC4696).